A 314-amino-acid polypeptide reads, in one-letter code: Serine/threonine-protein phosphatase CPPED1 (314 aa).

Phosphoserine is present on Ser-2. Residues 47 to 250 form a catalytic region; that stretch reads KAWSTGDCDN…KVVFSGHYHR (204 aa). 4 residues coordinate a divalent metal cation: Asp-53, Asp-90, Asn-127, and His-247. At Ser-294 the chain carries Phosphoserine.

This sequence belongs to the metallophosphoesterase superfamily. CPPED1 family. A divalent metal cation is required as a cofactor.

The protein localises to the cytoplasm. It carries out the reaction O-phospho-L-seryl-[protein] + H2O = L-seryl-[protein] + phosphate. The enzyme catalyses O-phospho-L-threonyl-[protein] + H2O = L-threonyl-[protein] + phosphate. Functionally, protein phosphatase that dephosphorylates AKT family kinase specifically at 'Ser-473', blocking cell cycle progression and promoting cell apoptosis. May play an inhibitory role in glucose uptake by adipocytes. The chain is Serine/threonine-protein phosphatase CPPED1 (CPPED1) from Pongo abelii (Sumatran orangutan).